We begin with the raw amino-acid sequence, 438 residues long: Glutamyl-tRNA reductase (438 aa).

Substrate contacts are provided by residues 55–58 (TCNR), S118, 123–125 (ETQ), and Q129. The active-site Nucleophile is the C56. 198–203 (GAGDMI) is an NADP(+) binding site.

The protein belongs to the glutamyl-tRNA reductase family. Homodimer.

It catalyses the reaction (S)-4-amino-5-oxopentanoate + tRNA(Glu) + NADP(+) = L-glutamyl-tRNA(Glu) + NADPH + H(+). It participates in porphyrin-containing compound metabolism; protoporphyrin-IX biosynthesis; 5-aminolevulinate from L-glutamyl-tRNA(Glu): step 1/2. Functionally, catalyzes the NADPH-dependent reduction of glutamyl-tRNA(Glu) to glutamate 1-semialdehyde (GSA). The sequence is that of Glutamyl-tRNA reductase from Polynucleobacter asymbioticus (strain DSM 18221 / CIP 109841 / QLW-P1DMWA-1) (Polynucleobacter necessarius subsp. asymbioticus).